A 117-amino-acid chain; its full sequence is Ribosome-binding factor A (117 aa).

The protein belongs to the RbfA family. Monomer. Binds 30S ribosomal subunits, but not 50S ribosomal subunits or 70S ribosomes.

The protein resides in the cytoplasm. One of several proteins that assist in the late maturation steps of the functional core of the 30S ribosomal subunit. Associates with free 30S ribosomal subunits (but not with 30S subunits that are part of 70S ribosomes or polysomes). Required for efficient processing of 16S rRNA. May interact with the 5'-terminal helix region of 16S rRNA. This chain is Ribosome-binding factor A, found in Nitrosomonas europaea (strain ATCC 19718 / CIP 103999 / KCTC 2705 / NBRC 14298).